The chain runs to 213 residues: MNKTLIINAHPKVDDTSSVSIKVFNHFLESYKEFIPNNETIEQINLYDDVVPMIDKTVLSAWEKQGNGQQLTDEEQKVTERMSEILQQFKSANTYVIVLPLHNFNIPSKLKDYMDNIMIARETFKYTETGSVGLLKDGRRMLVIQASGGIYTNDDWYTDVEYSHKYLKAMFNFLGIEDYQIVRAQGTAVLDPNEVLQNAYREVEEAASRLANK.

Residue 18-20 (SVS) coordinates FMN.

This sequence belongs to the azoreductase type 1 family. In terms of assembly, homodimer. It depends on FMN as a cofactor.

It catalyses the reaction 2 a quinone + NADH + H(+) = 2 a 1,4-benzosemiquinone + NAD(+). The enzyme catalyses N,N-dimethyl-1,4-phenylenediamine + anthranilate + 2 NAD(+) = 2-(4-dimethylaminophenyl)diazenylbenzoate + 2 NADH + 2 H(+). Quinone reductase that provides resistance to thiol-specific stress caused by electrophilic quinones. Its function is as follows. Also exhibits azoreductase activity. Catalyzes the reductive cleavage of the azo bond in aromatic azo compounds to the corresponding amines. This Bacillus cereus (strain ZK / E33L) protein is FMN-dependent NADH:quinone oxidoreductase 1.